Consider the following 66-residue polypeptide: Large ribosomal subunit protein bL35 (66 aa).

Basic residues-rich tracts occupy residues 1–16 (MPKQ…RVKR) and 23–45 (KRGR…RQLR). The disordered stretch occupies residues 1–53 (MPKQKTHRGLAKRVKRTGGGGLKRGRAFTSHRFHGKTKKQRRQLRKASMVAKG).

The protein belongs to the bacterial ribosomal protein bL35 family.

In Enterococcus faecalis (strain ATCC 700802 / V583), this protein is Large ribosomal subunit protein bL35.